The primary structure comprises 270 residues: Tryptophan synthase alpha chain (270 aa).

Catalysis depends on proton acceptor residues Glu-49 and Asp-60.

The protein belongs to the TrpA family. In terms of assembly, tetramer of two alpha and two beta chains.

It carries out the reaction (1S,2R)-1-C-(indol-3-yl)glycerol 3-phosphate + L-serine = D-glyceraldehyde 3-phosphate + L-tryptophan + H2O. The protein operates within amino-acid biosynthesis; L-tryptophan biosynthesis; L-tryptophan from chorismate: step 5/5. In terms of biological role, the alpha subunit is responsible for the aldol cleavage of indoleglycerol phosphate to indole and glyceraldehyde 3-phosphate. The protein is Tryptophan synthase alpha chain of Pseudomonas syringae pv. tomato (strain ATCC BAA-871 / DC3000).